We begin with the raw amino-acid sequence, 452 residues long: Bifunctional protein GlmU (452 aa).

The tract at residues 1-232 (MTGRSCLTIV…EDEVRGINTK (232 aa)) is pyrophosphorylase. Residues 11 to 14 (LAAG), Lys25, Gln78, and 83 to 84 (GT) each bind UDP-N-acetyl-alpha-D-glucosamine. Mg(2+) is bound at residue Asp108. The UDP-N-acetyl-alpha-D-glucosamine site is built by Gly144, Glu158, Asn173, and Asn230. Residue Asn230 coordinates Mg(2+). The linker stretch occupies residues 233-253 (AQLAEAEQVMQARLRKEALDA). An N-acetyltransferase region spans residues 254 to 452 (GVTMVAPDTV…KLLAKKPKTG (199 aa)). Residues Arg319 and Lys337 each coordinate UDP-N-acetyl-alpha-D-glucosamine. His349 (proton acceptor) is an active-site residue. Tyr352 and Asn363 together coordinate UDP-N-acetyl-alpha-D-glucosamine. Acetyl-CoA is bound by residues Ala366, 372-373 (NY), Ser391, Ser409, and Arg426.

It in the N-terminal section; belongs to the N-acetylglucosamine-1-phosphate uridyltransferase family. The protein in the C-terminal section; belongs to the transferase hexapeptide repeat family. Homotrimer. The cofactor is Mg(2+).

The protein localises to the cytoplasm. It catalyses the reaction alpha-D-glucosamine 1-phosphate + acetyl-CoA = N-acetyl-alpha-D-glucosamine 1-phosphate + CoA + H(+). The enzyme catalyses N-acetyl-alpha-D-glucosamine 1-phosphate + UTP + H(+) = UDP-N-acetyl-alpha-D-glucosamine + diphosphate. It functions in the pathway nucleotide-sugar biosynthesis; UDP-N-acetyl-alpha-D-glucosamine biosynthesis; N-acetyl-alpha-D-glucosamine 1-phosphate from alpha-D-glucosamine 6-phosphate (route II): step 2/2. Its pathway is nucleotide-sugar biosynthesis; UDP-N-acetyl-alpha-D-glucosamine biosynthesis; UDP-N-acetyl-alpha-D-glucosamine from N-acetyl-alpha-D-glucosamine 1-phosphate: step 1/1. It participates in bacterial outer membrane biogenesis; LPS lipid A biosynthesis. Its function is as follows. Catalyzes the last two sequential reactions in the de novo biosynthetic pathway for UDP-N-acetylglucosamine (UDP-GlcNAc). The C-terminal domain catalyzes the transfer of acetyl group from acetyl coenzyme A to glucosamine-1-phosphate (GlcN-1-P) to produce N-acetylglucosamine-1-phosphate (GlcNAc-1-P), which is converted into UDP-GlcNAc by the transfer of uridine 5-monophosphate (from uridine 5-triphosphate), a reaction catalyzed by the N-terminal domain. The sequence is that of Bifunctional protein GlmU from Nitrobacter hamburgensis (strain DSM 10229 / NCIMB 13809 / X14).